A 384-amino-acid polypeptide reads, in one-letter code: Gastrin-releasing peptide receptor (384 aa).

The Extracellular segment spans residues M1 to G38. N20 is a glycosylation site (N-linked (GlcNAc...) asparagine). Residues I39–I62 traverse the membrane as a helical segment. The Cytoplasmic segment spans residues K63 to N76. A helical membrane pass occupies residues L77 to V96. Residues D97–K114 lie on the Extracellular side of the membrane. Cysteines 113 and 196 form a disulfide. A helical membrane pass occupies residues L115–A136. The Cytoplasmic portion of the chain corresponds to D137–H152. The chain crosses the membrane as a helical span at residues A153 to P174. Residues E175–K208 lie on the Extracellular side of the membrane. A helical membrane pass occupies residues I209–A234. Over K235–K264 the chain is Cytoplasmic. Residues T265–L285 form a helical membrane-spanning segment. Residues Y286–M298 are Extracellular-facing. A helical membrane pass occupies residues L299–L325. Topologically, residues S326–V384 are cytoplasmic. C339 carries the S-palmitoyl cysteine lipid modification. S350 is subject to Phosphoserine.

Belongs to the G-protein coupled receptor 1 family. As to expression, highly expressed in pancreas. Also expressed in stomach, adrenal cortex and brain. In brain, expressed in cells throughout the cortex.

It is found in the cell membrane. Its function is as follows. Receptor for gastrin-releasing peptide (GRP). Signals via association with G proteins that activate a phosphatidylinositol-calcium second messenger system, resulting in Akt phosphorylation. Contributes to the regulation of food intake. Contributes to the perception of prurient stimuli and transmission of itch signals in the spinal cord that promote scratching behavior, but does not play a role in the perception of pain. Contributes primarily to nonhistaminergic itch sensation. In one study, shown to act in the amygdala as part of an inhibitory network which inhibits memory specifically related to learned fear. In another study, shown to contribute to disinhibition of glutamatergic cells in the auditory cortex via signaling on vasoactive intestinal peptide-expressing cells which leads to enhanced auditory fear memories. Contributes to the induction of sighing through signaling in the pre-Botzinger complex, a cluster of several thousand neurons in the ventrolateral medulla responsible for inspiration during respiratory activity. The protein is Gastrin-releasing peptide receptor (GRPR) of Homo sapiens (Human).